We begin with the raw amino-acid sequence, 267 residues long: Apolipoprotein A-I (267 aa).

The signal sequence occupies residues 1–18 (MKAAVLTLAVLFLTGSQA). 2 tandem repeats follow at residues 68-89 (LKLL…EQLG) and 90-111 (PVTQ…QEMS). Positions 68-267 (LKLLDNWDSV…EEYTKKLNTQ (200 aa)) are 10 X approximate tandem repeats. The residue at position 110 (methionine 110) is a Methionine sulfoxide. Residues 112–122 (KDLEEVKAKVQ) form a 3; half-length repeat. 5 consecutive repeat copies span residues 123-144 (PYLD…QKVE), 145-166 (PLRA…EKLS), 167-188 (PLGE…THLA), 189-210 (PYSD…ENGG), and 211-232 (ARLA…EKAK). At methionine 136 the chain carries Methionine sulfoxide. Residues 233–243 (PALEDLRQGLL) form a 9; half-length repeat. The stretch at 244 to 267 (PVLESFKVSFLSALEEYTKKLNTQ) is repeat 10.

It belongs to the apolipoprotein A1/A4/E family. In terms of assembly, homodimer. Interacts with APOA1BP and CLU. Component of a sperm activating protein complex (SPAP), consisting of APOA1, an immunoglobulin heavy chain, an immunoglobulin light chain and albumin. Interacts with NDRG1. Interacts with SCGB3A2. Interacts with NAXE and YJEFN3. In terms of processing, glycosylated. Post-translationally, palmitoylated. Phosphorylation sites are present in the extracellular medium. Major protein of plasma HDL, also found in chylomicrons.

It localises to the secreted. In terms of biological role, participates in the reverse transport of cholesterol from tissues to the liver for excretion by promoting cholesterol efflux from tissues and by acting as a cofactor for the lecithin cholesterol acyltransferase (LCAT). As part of the SPAP complex, activates spermatozoa motility. This is Apolipoprotein A-I (APOA1) from Pan troglodytes (Chimpanzee).